Here is a 367-residue protein sequence, read N- to C-terminus: Methylthioribose-1-phosphate isomerase (367 aa).

Substrate-binding positions include 48–50 (RGA), Arg-91, and Gln-215. The active-site Proton donor is the Asp-256. Position 266-267 (266-267 (NK)) interacts with substrate.

This sequence belongs to the eIF-2B alpha/beta/delta subunits family. MtnA subfamily.

It carries out the reaction 5-(methylsulfanyl)-alpha-D-ribose 1-phosphate = 5-(methylsulfanyl)-D-ribulose 1-phosphate. It functions in the pathway amino-acid biosynthesis; L-methionine biosynthesis via salvage pathway; L-methionine from S-methyl-5-thio-alpha-D-ribose 1-phosphate: step 1/6. Functionally, catalyzes the interconversion of methylthioribose-1-phosphate (MTR-1-P) into methylthioribulose-1-phosphate (MTRu-1-P). This chain is Methylthioribose-1-phosphate isomerase, found in Syntrophus aciditrophicus (strain SB).